The chain runs to 191 residues: Thymidylate kinase (191 aa).

7 to 14 (GVDGAGKS) provides a ligand contact to ATP.

The protein belongs to the thymidylate kinase family.

The enzyme catalyses dTMP + ATP = dTDP + ADP. Phosphorylation of dTMP to form dTDP in both de novo and salvage pathways of dTTP synthesis. The sequence is that of Thymidylate kinase from Helicobacter pylori (strain P12).